The chain runs to 167 residues: uncharacterized protein (167 aa).

Residues 148-167 (NKESRGENDGGEERESANIY) are disordered.

This is an uncharacterized protein from Homo sapiens (Human).